Reading from the N-terminus, the 505-residue chain is tRNA-2-methylthio-N(6)-dimethylallyladenosine synthase (505 aa).

One can recognise an MTTase N-terminal domain in the interval 10 to 126 (RSYEVRTYGC…LPALLDRARH (117 aa)). [4Fe-4S] cluster is bound by residues C19, C55, C89, C163, C167, and C170. The Radical SAM core domain occupies 149–385 (RESAYAGWVS…IALQEQITLE (237 aa)). The TRAM domain maps to 388–459 (QKLVGAEVEL…PHHLVADTPV (72 aa)).

Belongs to the methylthiotransferase family. MiaB subfamily. As to quaternary structure, monomer. Requires [4Fe-4S] cluster as cofactor.

The protein resides in the cytoplasm. The enzyme catalyses N(6)-dimethylallyladenosine(37) in tRNA + (sulfur carrier)-SH + AH2 + 2 S-adenosyl-L-methionine = 2-methylsulfanyl-N(6)-dimethylallyladenosine(37) in tRNA + (sulfur carrier)-H + 5'-deoxyadenosine + L-methionine + A + S-adenosyl-L-homocysteine + 2 H(+). Functionally, catalyzes the methylthiolation of N6-(dimethylallyl)adenosine (i(6)A), leading to the formation of 2-methylthio-N6-(dimethylallyl)adenosine (ms(2)i(6)A) at position 37 in tRNAs that read codons beginning with uridine. The sequence is that of tRNA-2-methylthio-N(6)-dimethylallyladenosine synthase from Rhodococcus jostii (strain RHA1).